The chain runs to 207 residues: Holliday junction branch migration complex subunit RuvA (207 aa).

The interval 1–64 (MIGRLRGNLL…EDAQLLYGFN (64 aa)) is domain I. The segment at 65–143 (TKNERALFRE…GWGAGDLFTP (79 aa)) is domain II. Positions 144-158 (ATDAAPMDDGSEFIT) are flexible linker. Positions 159–207 (SPQSAVDEAVSALIALGYKPQQASKTVSQIAKPDMTSEVLIRESLKSMI) are domain III.

It belongs to the RuvA family. As to quaternary structure, homotetramer. Forms an RuvA(8)-RuvB(12)-Holliday junction (HJ) complex. HJ DNA is sandwiched between 2 RuvA tetramers; dsDNA enters through RuvA and exits via RuvB. An RuvB hexamer assembles on each DNA strand where it exits the tetramer. Each RuvB hexamer is contacted by two RuvA subunits (via domain III) on 2 adjacent RuvB subunits; this complex drives branch migration. In the full resolvosome a probable DNA-RuvA(4)-RuvB(12)-RuvC(2) complex forms which resolves the HJ.

Its subcellular location is the cytoplasm. The RuvA-RuvB-RuvC complex processes Holliday junction (HJ) DNA during genetic recombination and DNA repair, while the RuvA-RuvB complex plays an important role in the rescue of blocked DNA replication forks via replication fork reversal (RFR). RuvA specifically binds to HJ cruciform DNA, conferring on it an open structure. The RuvB hexamer acts as an ATP-dependent pump, pulling dsDNA into and through the RuvAB complex. HJ branch migration allows RuvC to scan DNA until it finds its consensus sequence, where it cleaves and resolves the cruciform DNA. This Aliivibrio fischeri (strain ATCC 700601 / ES114) (Vibrio fischeri) protein is Holliday junction branch migration complex subunit RuvA.